The sequence spans 282 residues: Type 1 encapsulin shell protein (282 aa).

Belongs to the encapsulin family. Family 1 subfamily. Initially thought to form a 180 subunit shell. Forms hollow shells composed of 240 subunits, making a shell about 42-43 nm in diameter. The monomer is capable of assuming 4 different conformations which allows packaging into the icosahedron. The shell has 12 pentameric and 30 hexameric capsomers which form the vertices and faces of the icosahedral nanocompartment.

The protein localises to the encapsulin nanocompartment. Its function is as follows. Shell component of a type 1 encapsulin nanocompartment. Assembles into proteinaceous icosahedral shells 42-43 nm in diameter with an iron- and phosphorus-rich core (1Fe:1.1P) which can store over 23,000-35,000 iron atoms (with a calculated maximum of 83,000 Fe). There are 2 types of negatively charged open pores in the cryo-electron structure; a 3-fold pore where 3 hexamers meet with a minimal size of 7.2 Angstroms and a 5-fold pore where pentamers meet with a minimal size of 2.3 Angstroms. The 2-fold pore seen in other encapsulin nanocompartments is closed. Empty compartments can be generated in E.coli. Both types of pore have extra density in their centers in the structure. 2 different cargo proteins have been identified (IMEF and Fer); when both are expressed in E.coli with the shell protein only IMEF is detected within the nanocompartment. E.coli expressing all 3 genes stores the largest amount of iron and is protected from Fe/H2O2-induced oxidative stress. Part of the iron-mineralizing encapsulin-associated Firmicute (IMEF) system. The protein is Type 1 encapsulin shell protein of Bacillus thermotolerans (Quasibacillus thermotolerans).